The chain runs to 342 residues: Glyceraldehyde-3-phosphate dehydrogenase (342 aa).

Residues 12 to 13 (RI), Asp-34, Lys-78, and Thr-120 contribute to the NAD(+) site. D-glyceraldehyde 3-phosphate contacts are provided by residues 151–153 (SCT) and Thr-182. Cys-152 serves as the catalytic Nucleophile. Residue Asn-183 participates in NAD(+) binding. D-glyceraldehyde 3-phosphate contacts are provided by residues Arg-197, 210–211 (TG), and Arg-233. Asn-322 is an NAD(+) binding site.

The protein belongs to the glyceraldehyde-3-phosphate dehydrogenase family. In terms of assembly, homotetramer.

The protein localises to the cytoplasm. The enzyme catalyses D-glyceraldehyde 3-phosphate + phosphate + NAD(+) = (2R)-3-phospho-glyceroyl phosphate + NADH + H(+). Its pathway is carbohydrate degradation; glycolysis; pyruvate from D-glyceraldehyde 3-phosphate: step 1/5. In terms of biological role, catalyzes the oxidative phosphorylation of glyceraldehyde 3-phosphate (G3P) to 1,3-bisphosphoglycerate (BPG) using the cofactor NAD. The first reaction step involves the formation of a hemiacetal intermediate between G3P and a cysteine residue, and this hemiacetal intermediate is then oxidized to a thioester, with concomitant reduction of NAD to NADH. The reduced NADH is then exchanged with the second NAD, and the thioester is attacked by a nucleophilic inorganic phosphate to produce BPG. This is Glyceraldehyde-3-phosphate dehydrogenase (gap) from Aquifex aeolicus (strain VF5).